The following is a 723-amino-acid chain: Polyribonucleotide nucleotidyltransferase (723 aa).

Mg(2+) contacts are provided by Asp488 and Asp494. The region spanning Pro555–Ile614 is the KH domain. The S1 motif domain maps to Gly624–Lys692. The interval Ser701–Gln723 is disordered. Over residues Ala707–Gln723 the composition is skewed to low complexity.

It belongs to the polyribonucleotide nucleotidyltransferase family. The cofactor is Mg(2+).

The protein localises to the cytoplasm. It carries out the reaction RNA(n+1) + phosphate = RNA(n) + a ribonucleoside 5'-diphosphate. Its function is as follows. Involved in mRNA degradation. Catalyzes the phosphorolysis of single-stranded polyribonucleotides processively in the 3'- to 5'-direction. The protein is Polyribonucleotide nucleotidyltransferase of Cupriavidus taiwanensis (strain DSM 17343 / BCRC 17206 / CCUG 44338 / CIP 107171 / LMG 19424 / R1) (Ralstonia taiwanensis (strain LMG 19424)).